Consider the following 115-residue polypeptide: Large ribosomal subunit protein bL19 (115 aa).

The protein belongs to the bacterial ribosomal protein bL19 family.

In terms of biological role, this protein is located at the 30S-50S ribosomal subunit interface and may play a role in the structure and function of the aminoacyl-tRNA binding site. This is Large ribosomal subunit protein bL19 from Bacillus pumilus (strain SAFR-032).